We begin with the raw amino-acid sequence, 221 residues long: Large ribosomal subunit protein uL3 (221 aa).

Belongs to the universal ribosomal protein uL3 family. As to quaternary structure, part of the 50S ribosomal subunit. Forms a cluster with proteins L14 and L19.

Functionally, one of the primary rRNA binding proteins, it binds directly near the 3'-end of the 23S rRNA, where it nucleates assembly of the 50S subunit. The polypeptide is Large ribosomal subunit protein uL3 (Chlamydia trachomatis serovar L2 (strain ATCC VR-902B / DSM 19102 / 434/Bu)).